The sequence spans 248 residues: Sugar fermentation stimulation protein homolog (248 aa).

This sequence belongs to the SfsA family.

This is Sugar fermentation stimulation protein homolog from Methylorubrum extorquens (strain PA1) (Methylobacterium extorquens).